Consider the following 424-residue polypeptide: Dihydroorotase (424 aa).

Residues histidine 61 and histidine 63 each coordinate Zn(2+). Substrate is bound by residues 63-65 (HLR) and asparagine 95. Aspartate 153, histidine 180, and histidine 233 together coordinate Zn(2+). Asparagine 279 contributes to the substrate binding site. Aspartate 306 lines the Zn(2+) pocket. Aspartate 306 is an active-site residue. Histidine 310 serves as a coordination point for substrate.

This sequence belongs to the metallo-dependent hydrolases superfamily. DHOase family. Class I DHOase subfamily. The cofactor is Zn(2+).

The catalysed reaction is (S)-dihydroorotate + H2O = N-carbamoyl-L-aspartate + H(+). Its pathway is pyrimidine metabolism; UMP biosynthesis via de novo pathway; (S)-dihydroorotate from bicarbonate: step 3/3. In terms of biological role, catalyzes the reversible cyclization of carbamoyl aspartate to dihydroorotate. This is Dihydroorotase from Citrifermentans bemidjiense (strain ATCC BAA-1014 / DSM 16622 / JCM 12645 / Bem) (Geobacter bemidjiensis).